The chain runs to 443 residues: MFLAQEIIRKKRNGLALCSEEIQFFVQGITTNSVSEGQIAALGMAVYFNDMNMDERIALTTAMRDSGTVLNWQSLELNGPVIDKHSTGGVGDVISLMLGPMAAACGGYVPMISGRGLGHTGGTLDKFDAIPGYQTEPSSELFRKVVKEVGVAIIGQTGDLVPADKRFYSIRDNTATVESISLITASILSKKLACNLDALAMDVKVGSGAFMPTYEASEELARSIAAVANGAGTKTTALLTDMNQVLASCAGNAVEVKEAIDFLTGAYRNPRLYEVTMGLCAEMLLLGGLASNEADARAKLNRVLDNGRAAELFGKMVSGLGGPADFVENYSKYLPQSQIIRPVFADMQGYAYSMDTRELGLAVVTLGGGRRKPGDALDYSVGLTQVCALGDKVDSSTPIAVIHAQSEAAFAEAELAVKKAIHIGETAPEKTPEIYAYIRASDL.

This sequence belongs to the thymidine/pyrimidine-nucleoside phosphorylase family. As to quaternary structure, homodimer.

It catalyses the reaction thymidine + phosphate = 2-deoxy-alpha-D-ribose 1-phosphate + thymine. Its pathway is pyrimidine metabolism; dTMP biosynthesis via salvage pathway; dTMP from thymine: step 1/2. Functionally, the enzymes which catalyze the reversible phosphorolysis of pyrimidine nucleosides are involved in the degradation of these compounds and in their utilization as carbon and energy sources, or in the rescue of pyrimidine bases for nucleotide synthesis. This chain is Thymidine phosphorylase, found in Shewanella baltica (strain OS155 / ATCC BAA-1091).